The chain runs to 212 residues: MQTAIIDYGMGNLHSVLKSVRTAGQLAGKNTKIFLSGDPDRVSRADKVIFPGQGAMPDCMAALTRGGLDEAVKDALKNKPFFGICVGAQLLFDHSEEGNTDGLGWFGGKVRRFARDLRDPQGCRLKVPHMGWNTVRQTQNHPLFQGIPQNTRFYFVHSYYFAPENPETILGESDYPSPFACIVGKDNVFATQFHTEKSHDAGLTMLKNFLNW.

A Glutamine amidotransferase type-1 domain is found at 2 to 212; the sequence is QTAIIDYGMG…LTMLKNFLNW (211 aa). Cys-85 functions as the Nucleophile in the catalytic mechanism. Catalysis depends on residues His-194 and Glu-196.

As to quaternary structure, heterodimer of HisH and HisF.

Its subcellular location is the cytoplasm. It carries out the reaction 5-[(5-phospho-1-deoxy-D-ribulos-1-ylimino)methylamino]-1-(5-phospho-beta-D-ribosyl)imidazole-4-carboxamide + L-glutamine = D-erythro-1-(imidazol-4-yl)glycerol 3-phosphate + 5-amino-1-(5-phospho-beta-D-ribosyl)imidazole-4-carboxamide + L-glutamate + H(+). It catalyses the reaction L-glutamine + H2O = L-glutamate + NH4(+). It participates in amino-acid biosynthesis; L-histidine biosynthesis; L-histidine from 5-phospho-alpha-D-ribose 1-diphosphate: step 5/9. IGPS catalyzes the conversion of PRFAR and glutamine to IGP, AICAR and glutamate. The HisH subunit catalyzes the hydrolysis of glutamine to glutamate and ammonia as part of the synthesis of IGP and AICAR. The resulting ammonia molecule is channeled to the active site of HisF. The protein is Imidazole glycerol phosphate synthase subunit HisH of Neisseria gonorrhoeae (strain ATCC 700825 / FA 1090).